The chain runs to 318 residues: Ferrochelatase (318 aa).

Residues histidine 186 and glutamate 264 each contribute to the Fe cation site.

This sequence belongs to the ferrochelatase family.

It is found in the cytoplasm. The catalysed reaction is heme b + 2 H(+) = protoporphyrin IX + Fe(2+). Its pathway is porphyrin-containing compound metabolism; protoheme biosynthesis; protoheme from protoporphyrin-IX: step 1/1. Its function is as follows. Catalyzes the ferrous insertion into protoporphyrin IX. This chain is Ferrochelatase, found in Chlamydia felis (strain Fe/C-56) (Chlamydophila felis).